Consider the following 90-residue polypeptide: Conotoxin Rg9.1 (90 aa).

An N-terminal signal peptide occupies residues M1–G20. A propeptide spanning residues N21–Q60 is cleaved from the precursor. 3 disulfide bridges follow: C58–C71, C62–C73, and C67–C80.

This sequence belongs to the conotoxin P superfamily. Expressed by the venom duct.

The protein localises to the secreted. In terms of biological role, probable neurotoxin that inhibits ion channels. This is Conotoxin Rg9.1 from Conus regius (Crown cone).